The following is a 146-amino-acid chain: Hemoglobin subunit beta (146 aa).

Residue Val1 is modified to N-acetylvaline. Residues 2–146 (HLSGEEKAAV…VANALAHKYH (145 aa)) form the Globin domain. Thr12 is subject to Phosphothreonine. Position 44 is a phosphoserine (Ser44). Lys59 carries the post-translational modification N6-acetyllysine. Residue His63 coordinates heme b. Lys82 carries the N6-acetyllysine modification. His92 is a heme b binding site. Cys93 carries the post-translational modification S-nitrosocysteine. Lys144 bears the N6-acetyllysine mark.

This sequence belongs to the globin family. Heterotetramer of two alpha chains and two beta chains. In terms of tissue distribution, red blood cells.

Its function is as follows. Involved in oxygen transport from the lung to the various peripheral tissues. This Pteropus alecto (Black flying fox) protein is Hemoglobin subunit beta (HBB).